The sequence spans 136 residues: MASLNKMQLIGNLGADPDIRYMQDGTPTVTVSVATTDTWKDKDTGNKEEKTEWHRVVFFGGLAEIVGEFLKKGSQIYVEGALRSRNWTDKEGNKRYTTEIMAKEMQMLGKKQDNNKVGNARHGDALPADEDDYYDF.

Residues 4 to 109 (LNKMQLIGNL…IMAKEMQMLG (106 aa)) form the SSB domain. Residues 109 to 136 (GKKQDNNKVGNARHGDALPADEDDYYDF) form a disordered region. Acidic residues predominate over residues 127-136 (PADEDDYYDF).

As to quaternary structure, homotetramer.

The sequence is that of Single-stranded DNA-binding protein 1 (ssb1) from Xylella fastidiosa (strain 9a5c).